Reading from the N-terminus, the 282-residue chain is Sulfur carrier protein FdhD (282 aa).

The active-site Cysteine persulfide intermediate is the cysteine 126. A Mo-bis(molybdopterin guanine dinucleotide)-binding site is contributed by 265 to 270; sequence FVRNNR.

It belongs to the FdhD family.

Its subcellular location is the cytoplasm. Functionally, required for formate dehydrogenase (FDH) activity. Acts as a sulfur carrier protein that transfers sulfur from IscS to the molybdenum cofactor prior to its insertion into FDH. The polypeptide is Sulfur carrier protein FdhD (Thermoplasma acidophilum (strain ATCC 25905 / DSM 1728 / JCM 9062 / NBRC 15155 / AMRC-C165)).